Reading from the N-terminus, the 366-residue chain is Protein U1 (366 aa).

It belongs to the herpesviridae US22 family.

This chain is Protein U1 (U1), found in Human herpesvirus 6A (strain Uganda-1102) (HHV-6 variant A).